A 221-amino-acid chain; its full sequence is Small ribosomal subunit protein eS1 (221 aa).

The protein belongs to the eukaryotic ribosomal protein eS1 family.

The polypeptide is Small ribosomal subunit protein eS1 (Pyrobaculum aerophilum (strain ATCC 51768 / DSM 7523 / JCM 9630 / CIP 104966 / NBRC 100827 / IM2)).